A 180-amino-acid chain; its full sequence is Stathmin-3 (180 aa).

S-palmitoyl cysteine attachment occurs at residues Cys22 and Cys24. An SLD domain is found at 38-180 (GDMEVKQLDK…NKEQREEMSG (143 aa)). Phosphoserine is present on residues Ser50, Ser60, Ser65, Ser68, Ser72, Ser73, and Ser81. The segment at 58–82 (LKSPSDLSPESPMLSSPPKRKDTSL) is disordered. Residues 60 to 74 (SPSDLSPESPMLSSP) show a composition bias toward low complexity. Positions 76-179 (KRKDTSLEEL…RNKEQREEMS (104 aa)) form a coiled coil.

This sequence belongs to the stathmin family. In terms of assembly, interacts with STAT3. Interacts with CLU (secreted form); this interaction may act as an important modulator during neuronal differentiation. In terms of processing, N-terminal palmitoylation promotes specific anchoring to the cytosolic leaflet of Golgi membranes and subsequent vesicular trafficking along dendrites and axons. Neuronal Stathmins are substrates for palmitoyltransferases ZDHHC3, ZDHHC7 and ZDHHC15.

The protein resides in the golgi apparatus. It is found in the cell projection. The protein localises to the growth cone. Its subcellular location is the axon. It localises to the cytoplasm. The protein resides in the cytosol. Exhibits microtubule-destabilizing activity, which is antagonized by STAT3. This chain is Stathmin-3 (STMN3), found in Bos taurus (Bovine).